The chain runs to 64 residues: Large ribosomal subunit protein bL28 (64 aa).

Residues 1-23 (MSKECYFTGRKTVSSNNRSHAMN) form a disordered region. Positions 11 to 23 (KTVSSNNRSHAMN) are enriched in polar residues.

The protein belongs to the bacterial ribosomal protein bL28 family.

This chain is Large ribosomal subunit protein bL28, found in Lactococcus lactis subsp. cremoris (strain SK11).